The following is a 206-amino-acid chain: Large ribosomal subunit protein uL4 (206 aa).

Belongs to the universal ribosomal protein uL4 family. As to quaternary structure, part of the 50S ribosomal subunit.

Functionally, one of the primary rRNA binding proteins, this protein initially binds near the 5'-end of the 23S rRNA. It is important during the early stages of 50S assembly. It makes multiple contacts with different domains of the 23S rRNA in the assembled 50S subunit and ribosome. Its function is as follows. Forms part of the polypeptide exit tunnel. This is Large ribosomal subunit protein uL4 from Nitratidesulfovibrio vulgaris (strain ATCC 29579 / DSM 644 / CCUG 34227 / NCIMB 8303 / VKM B-1760 / Hildenborough) (Desulfovibrio vulgaris).